The primary structure comprises 358 residues: Serine/threonine-protein phosphatase 2A activator 2 (358 aa).

This sequence belongs to the PTPA-type PPIase family.

Its subcellular location is the cytoplasm. The catalysed reaction is [protein]-peptidylproline (omega=180) = [protein]-peptidylproline (omega=0). PPIases accelerate the folding of proteins. It catalyzes the cis-trans isomerization of proline imidic peptide bonds in oligopeptides. Acts as a regulatory subunit for PP2A-like phosphatases modulating their activity or substrate specificity, probably by inducing a conformational change in the catalytic subunit, a direct target of the PPIase. Can reactivate inactive phosphatase PP2A-phosphatase methylesterase complexes (PP2Ai) in presence of ATP and Mg(2+) by dissociating the inactive form from the complex. The sequence is that of Serine/threonine-protein phosphatase 2A activator 2 (RRD2) from Candida albicans (strain SC5314 / ATCC MYA-2876) (Yeast).